The following is a 201-amino-acid chain: Probable molybdenum cofactor guanylyltransferase (201 aa).

Residues 16-18 (LAG), Lys28, Asp75, and Asp107 each bind GTP. Asp107 is a Mg(2+) binding site.

It belongs to the MobA family. Requires Mg(2+) as cofactor.

Its subcellular location is the cytoplasm. It carries out the reaction Mo-molybdopterin + GTP + H(+) = Mo-molybdopterin guanine dinucleotide + diphosphate. Transfers a GMP moiety from GTP to Mo-molybdopterin (Mo-MPT) cofactor (Moco or molybdenum cofactor) to form Mo-molybdopterin guanine dinucleotide (Mo-MGD) cofactor. This is Probable molybdenum cofactor guanylyltransferase from Mycobacterium ulcerans (strain Agy99).